Here is a 479-residue protein sequence, read N- to C-terminus: NAC domain-containing protein 45 (479 aa).

Residues 6 to 157 (LPPGFRFHPT…AYALCRVFKK (152 aa)) enclose the NAC domain. The DNA-binding element occupies 105-163 (IGTKKTLVYYRGRAPHGIRTGWVMHEYRLDETECEPSAYGMQDAYALCRVFKKIVIEAK).

As to expression, expressed in a few sieve element cells before enucleation and in phloem-pole pericycle cells.

Its subcellular location is the nucleus. Transcription factor directing sieve element enucleation and cytosol degradation. Not required for formation of lytic vacuoles. Regulates, with NAC086, the transcription of NEN1, NEN2, NEN3, NEN4, RTM1, RTM2, UBP16, PLDZETA, ABCB10 and At1g26450. In Arabidopsis thaliana (Mouse-ear cress), this protein is NAC domain-containing protein 45.